The primary structure comprises 640 residues: 1,4-alpha-glucan branching enzyme GlgB (640 aa).

Catalysis depends on D317, which acts as the Nucleophile. E370 acts as the Proton donor in catalysis.

Belongs to the glycosyl hydrolase 13 family. GlgB subfamily. In terms of assembly, monomer.

It carries out the reaction Transfers a segment of a (1-&gt;4)-alpha-D-glucan chain to a primary hydroxy group in a similar glucan chain.. It participates in glycan biosynthesis; glycogen biosynthesis. Functionally, catalyzes the formation of the alpha-1,6-glucosidic linkages in glycogen by scission of a 1,4-alpha-linked oligosaccharide from growing alpha-1,4-glucan chains and the subsequent attachment of the oligosaccharide to the alpha-1,6 position. This Nitratidesulfovibrio vulgaris (strain ATCC 29579 / DSM 644 / CCUG 34227 / NCIMB 8303 / VKM B-1760 / Hildenborough) (Desulfovibrio vulgaris) protein is 1,4-alpha-glucan branching enzyme GlgB.